The primary structure comprises 719 residues: MFGKKKKKIEISGPSNFEHRVHTGFDPQEQKFTGLPQQWHSLLADTANRPKPMVDPSCITPIQLAPMKTIVRGNKSCKETSINGLLEDFDNISVTRSNSLRKESPPTPDQGAASRIQGHSEENGFITFSQYSSESDTTADYTTEKYRDRSLYGDDLDLYYKSSHAAKQNGHAMKMKHGDAYYPEMKSLKTDLAGFPVDYHTHLDSLRKSSEYGDLRWDYQRASSSSPLDYSFQLTPSRTAGTSRCSKESLAYSESDWGPSLDDYDRRPKSSYLHQTSPQPAMRQRSKSGSGLQEPMMPFGASAFKTHPQGHSYNSYTYPRLSEPTMCIPKVDYDRAQMVFSPPLSGSDTYPRGPTKLPQSQSKAGYSSGSHQYPSGYHKASLYHHPSLQTSSQYISTASYLSSLSISSSTYPPPSWGSSSDQQPSRVSHEQFRAALQLVVSPGDPREYLDNFIKIGEGSTGIVCIATEKHTGKQVAVKKMDLRKQQRRELLFNEVVIMRDYHHDNVVDMYNSYLVGDELWVVMEFLEGGALTDIVTHTRMNEEQIATVCLSVLKALSYLHNQGVIHRDIKSDSILLTSDGRIKLSDFGFCAQVSKEVPKRKSLVGTPYWMAPEVISRLPYGTEVDIWSLGIMVIEMIDGEPPYFNEPPLQAMRRIRDSLPPRVKDLHKVSSMLRGFLDLMLVREPSQRATAQELLGHPFLKLAGPPSCIVPLMRQYRHH.

Disordered stretches follow at residues 1-28, 96-118, 226-245, 253-298, and 339-372; these read MFGKKKKKIEISGPSNFEHRVHTGFDPQ, RSNSLRKESPPTPDQGAASRIQG, SPLDYSFQLTPSRTAGTSRC, SESD…PMMP, and VFSPPLSGSDTYPRGPTKLPQSQSKAGYSSGSHQ. In terms of domain architecture, CRIB spans 11–24; sequence ISGPSNFEHRVHTG. The tract at residues 25 to 448 is linker; sequence FDPQEQKFTG…VVSPGDPREY (424 aa). The residue at position 104 (Ser104) is a Phosphoserine. Phosphothreonine is present on Thr107. Over residues 226-244 the composition is skewed to polar residues; that stretch reads SPLDYSFQLTPSRTAGTSR. Over residues 357–372 the composition is skewed to polar residues; it reads LPQSQSKAGYSSGSHQ. Residues 449 to 700 form the Protein kinase domain; it reads LDNFIKIGEG…AQELLGHPFL (252 aa). Residues 455–463 and Lys478 contribute to the ATP site; that span reads IGEGSTGIV. Asp568 functions as the Proton acceptor in the catalytic mechanism.

This sequence belongs to the protein kinase superfamily. STE Ser/Thr protein kinase family. STE20 subfamily. Interacts tightly with GTP-bound but not GDP-bound CDC42/p21 and RAC1. Interacts with MARK2, leading to inhibit MARK2 independently of kinase activity. Interacts with RHOD and RHOH. In terms of processing, autophosphorylated when activated by CDC42/p21. As to expression, highly expressed in brain and eye. Also expressed in adrenal gland, pancreas, prostate and testes. Within the brain, expression is restricted to neurons. Present in brain but not in kidney, lung and spleen (at protein level).

The protein localises to the mitochondrion. It is found in the cytoplasm. It localises to the nucleus. The catalysed reaction is L-seryl-[protein] + ATP = O-phospho-L-seryl-[protein] + ADP + H(+). It catalyses the reaction L-threonyl-[protein] + ATP = O-phospho-L-threonyl-[protein] + ADP + H(+). Its function is as follows. Serine/threonine protein kinase that plays a role in a variety of different signaling pathways including cytoskeleton regulation, cell migration, proliferation or cell survival. Activation by various effectors including growth factor receptors or active CDC42 and RAC1 results in a conformational change and a subsequent autophosphorylation on several serine and/or threonine residues. Phosphorylates the proto-oncogene RAF1 and stimulates its kinase activity. Promotes cell survival by phosphorylating the BCL2 antagonist of cell death BAD. Phosphorylates CTNND1, probably to regulate cytoskeletal organization and cell morphology. Keeps microtubules stable through MARK2 inhibition and destabilizes the F-actin network leading to the disappearance of stress fibers and focal adhesions. The chain is Serine/threonine-protein kinase PAK 5 from Mus musculus (Mouse).